We begin with the raw amino-acid sequence, 415 residues long: Serine hydroxymethyltransferase (415 aa).

(6S)-5,6,7,8-tetrahydrofolate-binding positions include leucine 117 and 121 to 123 (GHL). An N6-(pyridoxal phosphate)lysine modification is found at lysine 225. Residues glutamate 241 and 349–351 (SPF) each bind (6S)-5,6,7,8-tetrahydrofolate.

It belongs to the SHMT family. As to quaternary structure, homodimer. Pyridoxal 5'-phosphate serves as cofactor.

The protein localises to the cytoplasm. It catalyses the reaction (6R)-5,10-methylene-5,6,7,8-tetrahydrofolate + glycine + H2O = (6S)-5,6,7,8-tetrahydrofolate + L-serine. It participates in one-carbon metabolism; tetrahydrofolate interconversion. The protein operates within amino-acid biosynthesis; glycine biosynthesis; glycine from L-serine: step 1/1. In terms of biological role, catalyzes the reversible interconversion of serine and glycine with tetrahydrofolate (THF) serving as the one-carbon carrier. This reaction serves as the major source of one-carbon groups required for the biosynthesis of purines, thymidylate, methionine, and other important biomolecules. Also exhibits THF-independent aldolase activity toward beta-hydroxyamino acids, producing glycine and aldehydes, via a retro-aldol mechanism. The polypeptide is Serine hydroxymethyltransferase (Campylobacter hominis (strain ATCC BAA-381 / DSM 21671 / CCUG 45161 / LMG 19568 / NCTC 13146 / CH001A)).